The sequence spans 94 residues: Acylphosphatase (94 aa).

An Acylphosphatase-like domain is found at 8-94; the sequence is TVHVIVKGKV…EKRYKHFAQL (87 aa). Active-site residues include arginine 23 and asparagine 41.

Belongs to the acylphosphatase family.

It carries out the reaction an acyl phosphate + H2O = a carboxylate + phosphate + H(+). This is Acylphosphatase (acyP) from Bordetella parapertussis (strain 12822 / ATCC BAA-587 / NCTC 13253).